The primary structure comprises 196 residues: Transcriptional regulatory protein UhpA (196 aa).

The Response regulatory domain occupies 3 to 116; sequence TVALIDDHLI…ELIAAVHTVA (114 aa). Asp-54 is modified (4-aspartylphosphate). The 66-residue stretch at 131-196 folds into the HTH luxR-type domain; that stretch reads AAGRQDPLTK…ELAHRMFDGW (66 aa). Positions 155-174 form a DNA-binding region, H-T-H motif; it reads VKEIAAELGLSPKTVHVHRA.

Phosphorylated and dephosphorylated by UhpB.

The protein localises to the cytoplasm. Part of the UhpABC signaling cascade that controls the expression of the hexose phosphate transporter UhpT. Activates the transcription of the uhpT gene. Acts by binding specifically to the uhpT promoter region. The protein is Transcriptional regulatory protein UhpA (uhpA) of Salmonella typhimurium (strain LT2 / SGSC1412 / ATCC 700720).